The following is a 251-amino-acid chain: Probable transcriptional regulatory protein Francci3_1368 (251 aa).

This sequence belongs to the TACO1 family.

It is found in the cytoplasm. The polypeptide is Probable transcriptional regulatory protein Francci3_1368 (Frankia casuarinae (strain DSM 45818 / CECT 9043 / HFP020203 / CcI3)).